We begin with the raw amino-acid sequence, 338 residues long: Aspartate--ammonia ligase (338 aa).

Belongs to the class-II aminoacyl-tRNA synthetase family. AsnA subfamily.

The protein localises to the cytoplasm. It carries out the reaction L-aspartate + NH4(+) + ATP = L-asparagine + AMP + diphosphate + H(+). The protein operates within amino-acid biosynthesis; L-asparagine biosynthesis; L-asparagine from L-aspartate (ammonia route): step 1/1. This Lactobacillus delbrueckii subsp. bulgaricus (strain ATCC BAA-365 / Lb-18) protein is Aspartate--ammonia ligase.